We begin with the raw amino-acid sequence, 618 residues long: Probable Xaa-Pro aminopeptidase P (618 aa).

Mn(2+) is bound by residues D414, D425, E523, and E537.

It belongs to the peptidase M24B family. It depends on Mn(2+) as a cofactor.

It catalyses the reaction Release of any N-terminal amino acid, including proline, that is linked to proline, even from a dipeptide or tripeptide.. Its function is as follows. Catalyzes the removal of a penultimate prolyl residue from the N-termini of peptides. The protein is Probable Xaa-Pro aminopeptidase P (AMPP) of Metarhizium robertsii (strain ARSEF 23 / ATCC MYA-3075) (Metarhizium anisopliae (strain ARSEF 23)).